A 318-amino-acid chain; its full sequence is NADH-ubiquinone oxidoreductase chain 1 (318 aa).

9 helical membrane-spanning segments follow: residues 2-22 (FLMNILCLVIPILLAMAFLTL), 37-57 (PNIVGPYGLLQPIADAIKLFI), 69-89 (LMFTLAPTLAFTLALSLWIPM), 100-120 (LGVLFILALSSLAVYSILWSG), 136-156 (VAQTISYEVTLAIILLSVMMM), 171-191 (HMWLILPLWPLAMMWFISTLA), 231-251 (IIMMNALTATLFLGAFHNPLF), 253-273 (ELFTVNFITKTLILTAIFLWV), and 293-313 (FLPLTLALCMLHVSIPALSAG).

Belongs to the complex I subunit 1 family. In terms of assembly, core subunit of respiratory chain NADH dehydrogenase (Complex I) which is composed of 45 different subunits.

It is found in the mitochondrion inner membrane. The enzyme catalyses a ubiquinone + NADH + 5 H(+)(in) = a ubiquinol + NAD(+) + 4 H(+)(out). Its function is as follows. Core subunit of the mitochondrial membrane respiratory chain NADH dehydrogenase (Complex I) which catalyzes electron transfer from NADH through the respiratory chain, using ubiquinone as an electron acceptor. Essential for the catalytic activity and assembly of complex I. This chain is NADH-ubiquinone oxidoreductase chain 1 (MT-ND1), found in Zaedyus pichiy (Pichi).